We begin with the raw amino-acid sequence, 792 residues long: Probable beta-D-xylosidase 6 (792 aa).

The signal sequence occupies residues 1 to 18 (MNLQLTLISLLFFTSAIA). N-linked (GlcNAc...) asparagine glycans are attached at residues asparagine 44, asparagine 104, asparagine 124, and asparagine 239. Aspartate 309 is a catalytic residue. N-linked (GlcNAc...) asparagine glycans are attached at residues asparagine 444 and asparagine 618.

The protein belongs to the glycosyl hydrolase 3 family.

It localises to the secreted. It is found in the extracellular space. The protein localises to the extracellular matrix. The sequence is that of Probable beta-D-xylosidase 6 (BXL6) from Arabidopsis thaliana (Mouse-ear cress).